A 340-amino-acid polypeptide reads, in one-letter code: Ketol-acid reductoisomerase (NADP(+)) (340 aa).

Positions 3-182 (VTMYYEEDVE…GCARVGIIET (180 aa)) constitute a KARI N-terminal Rossmann domain. NADP(+) contacts are provided by residues 26-29 (YGSQ), arginine 49, serine 53, and 83-86 (DELQ). Residue histidine 108 is part of the active site. Glycine 134 is an NADP(+) binding site. In terms of domain architecture, KARI C-terminal knotted spans 183–328 (TFKEETEEDL…AELRKAMPFT (146 aa)). 4 residues coordinate Mg(2+): aspartate 191, glutamate 195, glutamate 227, and glutamate 231. Serine 252 provides a ligand contact to substrate.

This sequence belongs to the ketol-acid reductoisomerase family. It depends on Mg(2+) as a cofactor.

The enzyme catalyses (2R)-2,3-dihydroxy-3-methylbutanoate + NADP(+) = (2S)-2-acetolactate + NADPH + H(+). It carries out the reaction (2R,3R)-2,3-dihydroxy-3-methylpentanoate + NADP(+) = (S)-2-ethyl-2-hydroxy-3-oxobutanoate + NADPH + H(+). It functions in the pathway amino-acid biosynthesis; L-isoleucine biosynthesis; L-isoleucine from 2-oxobutanoate: step 2/4. Its pathway is amino-acid biosynthesis; L-valine biosynthesis; L-valine from pyruvate: step 2/4. Functionally, involved in the biosynthesis of branched-chain amino acids (BCAA). Catalyzes an alkyl-migration followed by a ketol-acid reduction of (S)-2-acetolactate (S2AL) to yield (R)-2,3-dihydroxy-isovalerate. In the isomerase reaction, S2AL is rearranged via a Mg-dependent methyl migration to produce 3-hydroxy-3-methyl-2-ketobutyrate (HMKB). In the reductase reaction, this 2-ketoacid undergoes a metal-dependent reduction by NADPH to yield (R)-2,3-dihydroxy-isovalerate. This Lactococcus lactis subsp. cremoris (strain MG1363) protein is Ketol-acid reductoisomerase (NADP(+)).